A 131-amino-acid polypeptide reads, in one-letter code: Ribonuclease VapC3 (131 aa).

The PINc domain occupies Val-4–Leu-121. Mg(2+) is bound by residues Asp-6, Asp-100, and Asp-118.

This sequence belongs to the PINc/VapC protein family. In terms of assembly, homodimer. Forms a complex with putative antitoxin VapB3, possibly VapB(2)-VapC(2). Mg(2+) is required as a cofactor.

With respect to regulation, inhibited by EDTA. In terms of biological role, toxic component of a type II toxin-antitoxin (TA) system. Has ribonuclease activity. The chain is Ribonuclease VapC3 from Pyrobaculum aerophilum (strain ATCC 51768 / DSM 7523 / JCM 9630 / CIP 104966 / NBRC 100827 / IM2).